The chain runs to 121 residues: Group 1 truncated hemoglobin (121 aa).

Met1 bears the N-acetylmethionine mark. A heme-binding site is contributed by His73.

The protein belongs to the truncated hemoglobin family. Group I subfamily. As to quaternary structure, monomer. The cofactor is heme.

This is Group 1 truncated hemoglobin from Tetrahymena pyriformis.